Here is a 314-residue protein sequence, read N- to C-terminus: MLDRIASIKKAPDEEYYVPGHRTCAGCGPALTYRLVAKAAGPNTIFIGPTGCMYVANTSYGCGPWRVPWIHAQITNGGAVASGIEAAYKAMIRKKKTDAEFPNIIVMAGDGGAVDIGLQALSAMLYRGHDVLFICYDNESYANTGIQTSPTTPYGANTTFTPPGEVVPEGKKLFPKDNPKVIAHGHPELKYVATASIGWPVDLMNKVRKGLNQEGPAYIHIHAPCPKGWQFPADKTIEMAKLAVQTGMFQLYEYENGEYKLSVKVDKRKPVSEYMKLQKRFAHLKPEHIAKMQAFVDARCAEVGITVPVVASNA.

4 residues coordinate [4Fe-4S] cluster: cysteine 24, cysteine 27, cysteine 52, and cysteine 225.

As to quaternary structure, dimer of heterotrimer of one alpha, one beta and one delta subunit. [4Fe-4S] cluster is required as a cofactor.

The enzyme catalyses oxidized 2[4Fe-4S]-[ferredoxin] + oxalate = reduced 2[4Fe-4S]-[ferredoxin] + 2 CO2. Its function is as follows. Catalyzes the anaerobic oxidation of oxalate using a broad range of electron acceptors, including ferredoxin and the nickel-dependent carbon monoxide dehydrogenase. Does not require coenzyme A as cosubstrate. Enables anaerobic growth on oxalate which is used as energy source by the bacteria. The chain is Oxalate oxidoreductase subunit beta from Moorella thermoacetica (strain ATCC 39073 / JCM 9320).